A 119-amino-acid polypeptide reads, in one-letter code: NADH dehydrogenase [ubiquinone] 1 subunit C2 (119 aa).

The helical transmembrane segment at 56–75 (GLHRQLLYITAFFFAGYYLV) threads the bilayer.

This sequence belongs to the complex I NDUFC2 subunit family. As to quaternary structure, complex I is composed of 45 different subunits. Interacts with TMEM242.

Its subcellular location is the mitochondrion inner membrane. Functionally, accessory subunit of the mitochondrial membrane respiratory chain NADH dehydrogenase (Complex I), that is believed not to be involved in catalysis but required for the complex assembly. Complex I functions in the transfer of electrons from NADH to the respiratory chain. The immediate electron acceptor for the enzyme is believed to be ubiquinone. The polypeptide is NADH dehydrogenase [ubiquinone] 1 subunit C2 (Pan troglodytes (Chimpanzee)).